The primary structure comprises 130 residues: Cuticle protein 14 isoform a (130 aa).

One can recognise a Chitin-binding type R&amp;R domain in the interval 24 to 90 (IGNYNFGYNE…NVHTNEPGTD (67 aa)).

This is Cuticle protein 14 isoform a from Limulus polyphemus (Atlantic horseshoe crab).